The sequence spans 612 residues: Actin-binding LIM protein 2 (612 aa).

LIM zinc-binding domains follow at residues 22–81 (ILCN…LYGT), 81–141 (TRCF…TLLG), 151–210 (RSCG…KFGI), and 210–270 (IRCD…ARTE). Positions 83, 86, 103, 106, 109, 112, 131, and 134 each coordinate Zn(2+). Cys212, Cys215, His232, Cys235, Cys238, Cys241, His260, and Cys263 together coordinate Zn(2+). Residues 269–278 (TEDKSKETRT) show a composition bias toward basic and acidic residues. 2 disordered regions span residues 269 to 295 (TEDKSKETRTSSESIVSVPASSTSGSP) and 341 to 433 (AVGD…DNIY). The segment covering 279 to 295 (SSESIVSVPASSTSGSP) has biased composition (low complexity). Ser282, Ser294, Gly351, Arg356, Ser365, and Ser368 each carry phosphoserine. Low complexity predominate over residues 364–373 (SSPSSAGSVS). Polar residues predominate over residues 394 to 416 (SGRSTPSLSVHSDSRPPSSTYQQ). Ser453 carries the post-translational modification Phosphoserine. The tract at residues 471–498 (ADTRTNSPDLDSQSLSLSSGTDQEPLQR) is disordered. Thr473 is modified (phosphothreonine). Ser477 and Ser579 each carry phosphoserine. Residues 477 to 489 (SPDLDSQSLSLSS) are compositionally biased toward low complexity. The 69-residue stretch at 544 to 612 (TREYKIYPYD…NDLKKKALLF (69 aa)) folds into the HP domain.

As to quaternary structure, interacts with F-actin and ABRA. In terms of tissue distribution, expressed in brain. Highly expressed in caudate/putamen, moderately expressed in the olfactory bulb. In the hippocampus, expressed in the CA1, CA2 and CA3 fields. In the cerebellum, expressed in Purkinje cells.

The protein resides in the cytoplasm. In terms of biological role, may act as scaffold protein. May stimulate ABRA activity and ABRA-dependent SRF transcriptional activity. In Mus musculus (Mouse), this protein is Actin-binding LIM protein 2 (Ablim2).